Consider the following 172-residue polypeptide: uncharacterized protein (172 aa).

Over residues 1–28 the composition is skewed to low complexity; sequence MAAAGVTAKAGGGTSAAAASLIRARSPA. Positions 1–172 are disordered; the sequence is MAAAGVTAKA…GGRRSGRDAG (172 aa). The span at 58–68 shows a compositional bias: basic residues; it reads PRRRSRARRGH. Residues 80 to 100 show a composition bias toward gly residues; it reads TVGGEGQASQIGGGGGGGGGR. Over residues 129-138 the composition is skewed to low complexity; the sequence is PGLASSPGVA. Residues 139–165 are compositionally biased toward gly residues; the sequence is PAGGSGGLWSGAGLCSGLGARGFPGGR.

This is an uncharacterized protein from Homo sapiens (Human).